A 131-amino-acid chain; its full sequence is Steroid Delta-isomerase (131 aa).

Tyr16 functions as the Proton donor in the catalytic mechanism. Catalysis depends on Asp40, which acts as the Proton acceptor. Asp103 serves as a coordination point for substrate.

As to quaternary structure, homodimer.

It carries out the reaction a 3-oxo-Delta(5)-steroid = a 3-oxo-Delta(4)-steroid. The chain is Steroid Delta-isomerase (ksi) from Pseudomonas putida (Arthrobacter siderocapsulatus).